The primary structure comprises 162 residues: Nitrogen regulatory protein (162 aa).

The region spanning 12–156 is the PTS EIIA type-2 domain; that stretch reads NVLNQECTRS…EELYEIITEA (145 aa). His-73 (tele-phosphohistidine intermediate) is an active-site residue.

It is found in the cytoplasm. Seems to have a role in regulating nitrogen assimilation. The protein is Nitrogen regulatory protein (ptsN) of Klebsiella oxytoca.